The following is a 241-amino-acid chain: Ribonuclease PH (241 aa).

Phosphate is bound by residues Arg-90 and 128–130 (GTR).

The protein belongs to the RNase PH family. In terms of assembly, homohexameric ring arranged as a trimer of dimers.

It carries out the reaction tRNA(n+1) + phosphate = tRNA(n) + a ribonucleoside 5'-diphosphate. Phosphorolytic 3'-5' exoribonuclease that plays an important role in tRNA 3'-end maturation. Removes nucleotide residues following the 3'-CCA terminus of tRNAs; can also add nucleotides to the ends of RNA molecules by using nucleoside diphosphates as substrates, but this may not be physiologically important. Probably plays a role in initiation of 16S rRNA degradation (leading to ribosome degradation) during starvation. In Corynebacterium diphtheriae (strain ATCC 700971 / NCTC 13129 / Biotype gravis), this protein is Ribonuclease PH.